A 126-amino-acid polypeptide reads, in one-letter code: Small ribosomal subunit protein uS13 (126 aa).

The segment at 95–126 (GMPVRGQRTRTNARTRRGRRGQAIGIKKKVKK) is disordered.

Belongs to the universal ribosomal protein uS13 family. In terms of assembly, part of the 30S ribosomal subunit. Forms a loose heterodimer with protein S19. Forms two bridges to the 50S subunit in the 70S ribosome.

Located at the top of the head of the 30S subunit, it contacts several helices of the 16S rRNA. In the 70S ribosome it contacts the 23S rRNA (bridge B1a) and protein L5 of the 50S subunit (bridge B1b), connecting the 2 subunits; these bridges are implicated in subunit movement. Contacts the tRNAs in the A and P-sites. The chain is Small ribosomal subunit protein uS13 from Chloroflexus aggregans (strain MD-66 / DSM 9485).